The primary structure comprises 652 residues: DNA ligase (652 aa).

NAD(+) is bound by residues 29 to 33 (DSEYD), 78 to 79 (SL), and E107. The active-site N6-AMP-lysine intermediate is K109. Residues R130, E164, K278, and K302 each contribute to the NAD(+) site. Residues C395, C398, C413, and C418 each contribute to the Zn(2+) site. Residues 577–652 (VADAALSGLT…VRDEAWLESL (76 aa)) form the BRCT domain.

This sequence belongs to the NAD-dependent DNA ligase family. LigA subfamily. The cofactor is Mg(2+). Mn(2+) is required as a cofactor.

It catalyses the reaction NAD(+) + (deoxyribonucleotide)n-3'-hydroxyl + 5'-phospho-(deoxyribonucleotide)m = (deoxyribonucleotide)n+m + AMP + beta-nicotinamide D-nucleotide.. Its function is as follows. DNA ligase that catalyzes the formation of phosphodiester linkages between 5'-phosphoryl and 3'-hydroxyl groups in double-stranded DNA using NAD as a coenzyme and as the energy source for the reaction. It is essential for DNA replication and repair of damaged DNA. The chain is DNA ligase from Streptococcus pneumoniae (strain CGSP14).